Reading from the N-terminus, the 358-residue chain is DNA replication and repair protein RecF (358 aa).

30–37 (GNNGSGKT) serves as a coordination point for ATP.

It belongs to the RecF family.

It is found in the cytoplasm. Its function is as follows. The RecF protein is involved in DNA metabolism; it is required for DNA replication and normal SOS inducibility. RecF binds preferentially to single-stranded, linear DNA. It also seems to bind ATP. The polypeptide is DNA replication and repair protein RecF (Histophilus somni (strain 129Pt) (Haemophilus somnus)).